Reading from the N-terminus, the 370-residue chain is Anhydro-N-acetylmuramic acid kinase (370 aa).

13-20 (GTSMDGVD) contributes to the ATP binding site.

Belongs to the anhydro-N-acetylmuramic acid kinase family.

It carries out the reaction 1,6-anhydro-N-acetyl-beta-muramate + ATP + H2O = N-acetyl-D-muramate 6-phosphate + ADP + H(+). It functions in the pathway amino-sugar metabolism; 1,6-anhydro-N-acetylmuramate degradation. Its pathway is cell wall biogenesis; peptidoglycan recycling. In terms of biological role, catalyzes the specific phosphorylation of 1,6-anhydro-N-acetylmuramic acid (anhMurNAc) with the simultaneous cleavage of the 1,6-anhydro ring, generating MurNAc-6-P. Is required for the utilization of anhMurNAc either imported from the medium or derived from its own cell wall murein, and thus plays a role in cell wall recycling. This is Anhydro-N-acetylmuramic acid kinase from Vibrio vulnificus (strain YJ016).